The following is a 331-amino-acid chain: Olfactory receptor 10S1 (331 aa).

Over 1-38 (MTSRSVCEKMTMTTENPNQTVVSHFFLEGLRYTAKHSS) the chain is Extracellular. Asn-18 is a glycosylation site (N-linked (GlcNAc...) asparagine). The chain crosses the membrane as a helical span at residues 39-59 (LFFLLFLLIYSITVAGNLLIL). Residues 60–67 (LTVGSDSH) are Cytoplasmic-facing. The chain crosses the membrane as a helical span at residues 68-88 (LSLPMYHFLGHLSFLDACLST). Residues 89 to 113 (VTVPKVMAGLLTLDGKVISFEGCAV) are Extracellular-facing. Residues Cys-111 and Cys-203 are joined by a disulfide bond. Residues 114–134 (QLYCFHFLASTECFLYTVMAY) form a helical membrane-spanning segment. The Cytoplasmic portion of the chain corresponds to 135–153 (DRYLAICQPLHYPVAMNRR). The chain crosses the membrane as a helical span at residues 154-174 (MCAEMAGITWAIGATHAAIHT). The Extracellular segment spans residues 175-211 (SLTFRLLYCGPCHIAYFFCDIPPVLKLACTDTTINEL). A helical transmembrane segment spans residues 212–231 (VMLASIGIVAAGCLILIVIS). Residues 232-251 (YIFIVAAVLRIRTAQGRQRA) lie on the Cytoplasmic side of the membrane. A helical transmembrane segment spans residues 252-272 (FSPCTAQLTGVLLYYVPPVCI). At 273 to 283 (YLQPRSSEAGA) the chain is on the extracellular side. Residues 284–304 (GAPAVFYTIVTPMLNPFIYTL) form a helical membrane-spanning segment. The Cytoplasmic portion of the chain corresponds to 305-331 (RNKEVKHALQRLLCSSFRESTAGSPPP).

The protein belongs to the G-protein coupled receptor 1 family.

It localises to the cell membrane. Its function is as follows. Odorant receptor. The sequence is that of Olfactory receptor 10S1 (OR10S1) from Homo sapiens (Human).